The following is a 103-amino-acid chain: Small ribosomal subunit protein uS10 (103 aa).

Belongs to the universal ribosomal protein uS10 family. Part of the 30S ribosomal subunit.

Involved in the binding of tRNA to the ribosomes. The polypeptide is Small ribosomal subunit protein uS10 (Pectobacterium atrosepticum (strain SCRI 1043 / ATCC BAA-672) (Erwinia carotovora subsp. atroseptica)).